We begin with the raw amino-acid sequence, 473 residues long: Bifunctional protein HldE (473 aa).

Positions 1–318 (MKLSMPRFDQ…RAIQREEGSE (318 aa)) are ribokinase. 194 to 197 (NLSE) is an ATP binding site. Asp263 is an active-site residue. Residues 343–473 (FTNGCFDILH…TAIVEKIRKH (131 aa)) are cytidylyltransferase.

This sequence in the N-terminal section; belongs to the carbohydrate kinase PfkB family. It in the C-terminal section; belongs to the cytidylyltransferase family. Homodimer.

It catalyses the reaction D-glycero-beta-D-manno-heptose 7-phosphate + ATP = D-glycero-beta-D-manno-heptose 1,7-bisphosphate + ADP + H(+). The catalysed reaction is D-glycero-beta-D-manno-heptose 1-phosphate + ATP + H(+) = ADP-D-glycero-beta-D-manno-heptose + diphosphate. The protein operates within nucleotide-sugar biosynthesis; ADP-L-glycero-beta-D-manno-heptose biosynthesis; ADP-L-glycero-beta-D-manno-heptose from D-glycero-beta-D-manno-heptose 7-phosphate: step 1/4. It participates in nucleotide-sugar biosynthesis; ADP-L-glycero-beta-D-manno-heptose biosynthesis; ADP-L-glycero-beta-D-manno-heptose from D-glycero-beta-D-manno-heptose 7-phosphate: step 3/4. Its function is as follows. Catalyzes the phosphorylation of D-glycero-D-manno-heptose 7-phosphate at the C-1 position to selectively form D-glycero-beta-D-manno-heptose-1,7-bisphosphate. In terms of biological role, catalyzes the ADP transfer from ATP to D-glycero-beta-D-manno-heptose 1-phosphate, yielding ADP-D-glycero-beta-D-manno-heptose. This chain is Bifunctional protein HldE, found in Pseudomonas entomophila (strain L48).